Reading from the N-terminus, the 474-residue chain is Carbohydrate sulfotransferase 3 (474 aa).

At 1-19 the chain is on the cytoplasmic side; the sequence is MEKGLALPQDCRDLVHNLK. Residues 20-38 traverse the membrane as a helical; Signal-anchor for type II membrane protein segment; it reads IRGRYVLFLAFVVIVFIFI. Residues 39–474 are Lumenal-facing; sequence EKENKIISRV…LEERGTFWVT (436 aa). 3 N-linked (GlcNAc...) asparagine glycosylation sites follow: Asn63, Asn74, and Asn96. 137 to 143 is a 3'-phosphoadenylyl sulfate binding site; it reads TRTGSSF. N-linked (GlcNAc...) asparagine glycosylation occurs at Asn252. 3'-phosphoadenylyl sulfate is bound at residue 297-305; it reads RDPRAVLAS. Residues Asn415 and Asn459 are each glycosylated (N-linked (GlcNAc...) asparagine).

This sequence belongs to the sulfotransferase 1 family. Gal/GlcNAc/GalNAc subfamily. In terms of processing, N-glycosylated.

The protein resides in the golgi apparatus membrane. It carries out the reaction chondroitin beta-D-glucuronate + n 3'-phosphoadenylyl sulfate = chondroitin 6'-sulfate + n adenosine 3',5'-bisphosphate + n H(+). The enzyme catalyses 3'-phosphoadenylyl sulfate + keratan = adenosine 3',5'-bisphosphate + keratan 6'-sulfate.. Functionally, sulfotransferase that utilizes 3'-phospho-5'-adenylyl sulfate (PAPS) as sulfonate donor to catalyze the transfer of sulfate to position 6 of the N-acetylgalactosamine (GalNAc) residue of chondroitin. Chondroitin sulfate constitutes the predominant proteoglycan present in cartilage and is distributed on the surfaces of many cells and extracellular matrices. Catalyzes with a lower efficiency the sulfation of Gal residues of keratan sulfate, another glycosaminoglycan. Can also catalyze the sulfation of the Gal residues in sialyl N-acetyllactosamine (sialyl LacNAc) oligosaccharides. May play a role in the maintenance of naive T-lymphocytes in the spleen. This Rattus norvegicus (Rat) protein is Carbohydrate sulfotransferase 3 (Chst3).